Consider the following 478-residue polypeptide: Multidrug resistance outer membrane protein MdtQ (478 aa).

Positions 1–21 (MNRDSFYPAIACFPLLLMLAG) are cleaved as a signal peptide. Cys-22 carries N-palmitoyl cysteine lipidation. Cys-22 carries the S-diacylglycerol cysteine lipid modification.

This sequence belongs to the outer membrane factor (OMF) (TC 1.B.17) family.

The protein resides in the cell outer membrane. Its function is as follows. Could be involved in resistance to puromycin, acriflavine and tetraphenylarsonium chloride. The sequence is that of Multidrug resistance outer membrane protein MdtQ (mdtQ) from Escherichia coli O157:H7.